Here is a 199-residue protein sequence, read N- to C-terminus: N-(5'-phosphoribosyl)anthranilate isomerase (199 aa).

This sequence belongs to the TrpF family.

The enzyme catalyses N-(5-phospho-beta-D-ribosyl)anthranilate = 1-(2-carboxyphenylamino)-1-deoxy-D-ribulose 5-phosphate. Its pathway is amino-acid biosynthesis; L-tryptophan biosynthesis; L-tryptophan from chorismate: step 3/5. The polypeptide is N-(5'-phosphoribosyl)anthranilate isomerase (Streptococcus pneumoniae (strain ATCC 700669 / Spain 23F-1)).